The chain runs to 331 residues: Olfactory receptor 7D11 (331 aa).

At 1-25 (MEIENHTLITKFLILGLSDDPELQP) the chain is on the extracellular side. N-linked (GlcNAc...) asparagine glycosylation occurs at Asn-5. The helical transmembrane segment at 26–46 (ILFGLFLSMYLVTLLGNLLII) threads the bilayer. The Cytoplasmic segment spans residues 47-57 (LAVSSDSHLHK). The chain crosses the membrane as a helical span at residues 58 to 78 (PMYFLLSNLSFIDICFISTTI). At 79–97 (PKMLVNMQSQIKDISYIEC) the chain is on the extracellular side. Cysteines 97 and 179 form a disulfide. The helical transmembrane segment at 98 to 118 (LTQVFFFNIFAGMDNFLLTLM) threads the bilayer. The Cytoplasmic portion of the chain corresponds to 119–142 (AYDRFVAICHPLNYTVIMNPRLCA). A helical membrane pass occupies residues 143–163 (LLILMFWIIMFWVSLIHVLLM). Residues 164–196 (NELNFSRGTEIPHFFCELAQVLKVSNSDNHVNN) lie on the Extracellular side of the membrane. Asn-167 is a glycosylation site (N-linked (GlcNAc...) asparagine). Residues 197–217 (VFMYVVTSLLGVIPMTGILMS) form a helical membrane-spanning segment. Residues 218-244 (YSQIFSSLFRMSSTVSKYKAFSTCGSH) are Cytoplasmic-facing. A helical membrane pass occupies residues 245–265 (LCVVTLFYGSGFGVYFSSSVV). The Extracellular portion of the chain corresponds to 266-271 (HSTQRR). A helical transmembrane segment spans residues 272–292 (KVASLMYTVISPMLNPFIYTL). Residues 293-331 (RNKDVKGALGKLFNRVASSPSCINDIRNKLLLRSVRQIL) lie on the Cytoplasmic side of the membrane.

Belongs to the G-protein coupled receptor 1 family.

The protein localises to the cell membrane. Possible olfactory or taste receptor. The polypeptide is Olfactory receptor 7D11 (Mus musculus (Mouse)).